The chain runs to 373 residues: Opsin Rh1 (373 aa).

The Extracellular portion of the chain corresponds to 1–54 (MDSFAAVATQLGPHFAALSNGSVVDKVTPDMAHLISPYWNQFPAMDPIWAKILT). Asn20 carries an N-linked (GlcNAc...) asparagine glycan. Residues 55–75 (AYMIIIGMISWCGNGVVIYIF) traverse the membrane as a helical segment. Topologically, residues 76–86 (ATTKSLRTPAN) are cytoplasmic. A helical transmembrane segment spans residues 87–107 (LLVINLAISDFGIMITNTPMM). Residues 108–124 (GINLYFETWVLGPMMCD) are Extracellular-facing. Cys123 and Cys200 are disulfide-bonded. Residues 125–145 (IYAGLGSAFGCSSIWSMCMIS) form a helical membrane-spanning segment. Residues 146-162 (LDRYQVIVKGMAGRPMT) are Cytoplasmic-facing. The helical transmembrane segment at 163–183 (IPLALGKIAYIWFMSSIWCLA) threads the bilayer. Residues 184 to 219 (PVFGWSRYVPEGNLTSCGIDYLERDWNPRSYLIFYS) lie on the Extracellular side of the membrane. Asn196 carries N-linked (GlcNAc...) asparagine glycosylation. A helical transmembrane segment spans residues 220–240 (IFVYYIPLFLICYSYWFIIAA). The Cytoplasmic segment spans residues 241–276 (VSAHEKAMREQAKKMNVKSLRSSEDADKSAEGKLAK). Residues 277 to 297 (VALVTISLWFMAWTPYLVINC) traverse the membrane as a helical segment. The Extracellular segment spans residues 298–308 (MGLFKFEGLTP). The helical transmembrane segment at 309-331 (LNTIWGACFAKSAACYNPIVYGI) threads the bilayer. Lys319 carries the N6-(retinylidene)lysine modification. The Cytoplasmic segment spans residues 332–373 (SHPKYRLALKEKCPCCVFGKVDDGKSSEAQSQATNSEAESKA). Positions 354 to 373 (DGKSSEAQSQATNSEAESKA) are disordered. Over residues 358–373 (SEAQSQATNSEAESKA) the composition is skewed to polar residues.

It belongs to the G-protein coupled receptor 1 family. Opsin subfamily. In terms of processing, phosphorylated on some or all of the serine and threonine residues present in the C-terminal region.

Its subcellular location is the cell projection. The protein resides in the rhabdomere membrane. Visual pigments are the light-absorbing molecules that mediate vision. They consist of an apoprotein, opsin, covalently linked to cis-retinal. The polypeptide is Opsin Rh1 (ninaE) (Drosophila pseudoobscura pseudoobscura (Fruit fly)).